The following is a 254-amino-acid chain: tRNA uridine(34) hydroxylase (254 aa).

Positions 123-217 constitute a Rhodanese domain; sequence QDPNVILLDT…YLESIPESES (95 aa). The active-site Cysteine persulfide intermediate is Cys177.

This sequence belongs to the TrhO family.

It carries out the reaction uridine(34) in tRNA + AH2 + O2 = 5-hydroxyuridine(34) in tRNA + A + H2O. Catalyzes oxygen-dependent 5-hydroxyuridine (ho5U) modification at position 34 in tRNAs. The chain is tRNA uridine(34) hydroxylase from Legionella pneumophila (strain Paris).